The chain runs to 361 residues: Phospho-N-acetylmuramoyl-pentapeptide-transferase (361 aa).

Transmembrane regions (helical) follow at residues 28–48 (LAII…IEFL), 74–94 (TMGG…LADL), 99–119 (IWIT…DDYA), 133–153 (SKLL…EYLD), 168–188 (LSLD…VGSS), 203–223 (VPIA…GNLI), 236–256 (TGEL…FLWF), 263–283 (VFMG…ISVI), 288–308 (IVLA…ILQV), and 338–358 (KVVI…LSSL).

It belongs to the glycosyltransferase 4 family. MraY subfamily. Mg(2+) is required as a cofactor.

It localises to the cell membrane. It carries out the reaction UDP-N-acetyl-alpha-D-muramoyl-L-alanyl-gamma-D-glutamyl-meso-2,6-diaminopimeloyl-D-alanyl-D-alanine + di-trans,octa-cis-undecaprenyl phosphate = di-trans,octa-cis-undecaprenyl diphospho-N-acetyl-alpha-D-muramoyl-L-alanyl-D-glutamyl-meso-2,6-diaminopimeloyl-D-alanyl-D-alanine + UMP. It participates in cell wall biogenesis; peptidoglycan biosynthesis. Functionally, catalyzes the initial step of the lipid cycle reactions in the biosynthesis of the cell wall peptidoglycan: transfers peptidoglycan precursor phospho-MurNAc-pentapeptide from UDP-MurNAc-pentapeptide onto the lipid carrier undecaprenyl phosphate, yielding undecaprenyl-pyrophosphoryl-MurNAc-pentapeptide, known as lipid I. The sequence is that of Phospho-N-acetylmuramoyl-pentapeptide-transferase from Rickettsia rickettsii.